An 880-amino-acid polypeptide reads, in one-letter code: Dynamin-like protein A (880 aa).

Positions 1 to 124 (MSVFKKKDKS…QVELERKRRD (124 aa)) are disordered. Basic and acidic residues predominate over residues 8–20 (DKSDDKKKKHDEE). The segment covering 22 to 31 (PQGTFQPASQ) has biased composition (polar residues). A compositionally biased stretch (low complexity) spans 32 to 68 (STSNTNLNSLASSVNNGASVGSTNGSTPNNSNGSTPT). A coiled-coil region spans residues 69 to 152 (YNHNNSAEEL…NEQVEISSLE (84 aa)). 2 stretches are compositionally biased toward basic and acidic residues: residues 77–94 (ELEK…KSEL) and 103–124 (KKKE…KRRD). Residues 191–478 (AVSHPEIVFV…VWKSYQDTIP (288 aa)) form the Dynamin-type G domain. The interval 201-208 (GPRSSGKS) is G1 motif. 201–208 (GPRSSGKS) contributes to the GTP binding site. The tract at residues 227–240 (IVGVGGSNANGCSK) is G2 motif. The segment at 315–318 (DSPG) is G3 motif. GTP-binding positions include 315 to 319 (DSPGL) and 380 to 383 (TKFH). Residues 380–383 (TKFH) are G4 motif. The tract at residues 413–416 (LPNH) is G5 motif. A coiled-coil region spans residues 479–509 (RILKHLRSKRQTAEATLNELQKQSSSLDSTK). Over residues 532–543 (TSEGNPSANGQT) the composition is skewed to polar residues. The disordered stretch occupies residues 532–551 (TSEGNPSANGQTLDEEKSQQ). Residues 824 to 861 (SNEQLEQLFEVQATREQLKQEEKKQQQILEKYSQIDEQ) adopt a coiled-coil conformation.

The protein belongs to the TRAFAC class dynamin-like GTPase superfamily. Dynamin/Fzo/YdjA family.

It is found in the cytoplasm. The protein localises to the cleavage furrow. It carries out the reaction GTP + H2O = GDP + phosphate + H(+). In terms of biological role, involved in cytokinesis. May hydrolyze GTP. The sequence is that of Dynamin-like protein A (dlpA) from Dictyostelium discoideum (Social amoeba).